The sequence spans 286 residues: 33 kDa chaperonin (286 aa).

Disulfide bonds link cysteine 225–cysteine 227 and cysteine 258–cysteine 261.

Belongs to the HSP33 family. In terms of processing, under oxidizing conditions two disulfide bonds are formed involving the reactive cysteines. Under reducing conditions zinc is bound to the reactive cysteines and the protein is inactive.

The protein localises to the cytoplasm. In terms of biological role, redox regulated molecular chaperone. Protects both thermally unfolding and oxidatively damaged proteins from irreversible aggregation. Plays an important role in the bacterial defense system toward oxidative stress. This chain is 33 kDa chaperonin, found in Shewanella loihica (strain ATCC BAA-1088 / PV-4).